Here is a 200-residue protein sequence, read N- to C-terminus: Charged multivesicular body protein 6 (200 aa).

A lipid anchor (N-myristoyl glycine) is attached at G2. Positions 10-94 (RSRVTEQDKA…ERMVQDIEFT (85 aa)) form a coiled coil. Positions 168–179 (LELPDVPSEPLP) match the Type-2 MIT-interacting motif motif. The interval 169 to 200 (ELPDVPSEPLPEEPPEATPVKNRPKPELVAAS) is disordered.

Belongs to the SNF7 family. As to quaternary structure, probable core component of the endosomal sorting required for transport complex III (ESCRT-III). ESCRT-III components are thought to multimerize to form a flat lattice on the perimeter membrane of the endosome.

It is found in the endomembrane system. It localises to the late endosome membrane. Probable core component of the endosomal sorting required for transport complex III (ESCRT-III) which is involved in multivesicular bodies (MVBs) formation and sorting of endosomal cargo proteins into MVBs. MVBs contain intraluminal vesicles (ILVs) that are generated by invagination and scission from the limiting membrane of the endosome and mostly are delivered to lysosomes enabling degradation of membrane proteins, such as stimulated growth factor receptors, lysosomal enzymes and lipids. In the ESCRT-III complex, it probably serves as an acceptor for the ESCRT-II complex on endosomal membranes. The chain is Charged multivesicular body protein 6 (CHMP6) from Gallus gallus (Chicken).